The chain runs to 192 residues: Large ribosomal subunit protein uL6 (192 aa).

Belongs to the universal ribosomal protein uL6 family. Component of the large ribosomal subunit.

It is found in the cytoplasm. Component of the large ribosomal subunit. The ribosome is a large ribonucleoprotein complex responsible for the synthesis of proteins in the cell. The protein is Large ribosomal subunit protein uL6 (rpl9) of Ictalurus punctatus (Channel catfish).